The following is a 450-amino-acid chain: Phosphoglucosamine mutase (450 aa).

Serine 101 serves as the catalytic Phosphoserine intermediate. Positions 101, 242, 244, and 246 each coordinate Mg(2+). The residue at position 101 (serine 101) is a Phosphoserine.

It belongs to the phosphohexose mutase family. Mg(2+) serves as cofactor. Post-translationally, activated by phosphorylation.

It carries out the reaction alpha-D-glucosamine 1-phosphate = D-glucosamine 6-phosphate. Functionally, catalyzes the conversion of glucosamine-6-phosphate to glucosamine-1-phosphate. The polypeptide is Phosphoglucosamine mutase (Rhodopseudomonas palustris (strain HaA2)).